The primary structure comprises 140 residues: uncharacterized protein (140 aa).

Positions arginine 3–proline 131 constitute a VOC domain. Histidine 6, glutamate 53, histidine 77, and glutamate 127 together coordinate a divalent metal cation.

This sequence belongs to the methylmalonyl-CoA epimerase family.

This is an uncharacterized protein from Bacillus subtilis (strain 168).